Reading from the N-terminus, the 340-residue chain is Ferrochelatase (340 aa).

The Fe cation site is built by His-189 and Glu-292.

Belongs to the ferrochelatase family.

It is found in the cytoplasm. It catalyses the reaction heme b + 2 H(+) = protoporphyrin IX + Fe(2+). It functions in the pathway porphyrin-containing compound metabolism; protoheme biosynthesis; protoheme from protoporphyrin-IX: step 1/1. Catalyzes the ferrous insertion into protoporphyrin IX. This is Ferrochelatase from Pseudomonas fluorescens (strain ATCC BAA-477 / NRRL B-23932 / Pf-5).